The chain runs to 383 residues: 8-amino-7-oxononanoate synthase (383 aa).

Arg-21 contacts substrate. 108 to 109 (GY) serves as a coordination point for pyridoxal 5'-phosphate. His-133 is a substrate binding site. Pyridoxal 5'-phosphate contacts are provided by Ser-179, His-207, and Thr-233. Residue Lys-236 is modified to N6-(pyridoxal phosphate)lysine. Thr-350 lines the substrate pocket.

This sequence belongs to the class-II pyridoxal-phosphate-dependent aminotransferase family. BioF subfamily. As to quaternary structure, homodimer. Pyridoxal 5'-phosphate serves as cofactor.

The catalysed reaction is 6-carboxyhexanoyl-[ACP] + L-alanine + H(+) = (8S)-8-amino-7-oxononanoate + holo-[ACP] + CO2. The protein operates within cofactor biosynthesis; biotin biosynthesis. In terms of biological role, catalyzes the decarboxylative condensation of pimeloyl-[acyl-carrier protein] and L-alanine to produce 8-amino-7-oxononanoate (AON), [acyl-carrier protein], and carbon dioxide. The chain is 8-amino-7-oxononanoate synthase from Yersinia pseudotuberculosis serotype IB (strain PB1/+).